The chain runs to 124 residues: Small ribosomal subunit protein uS12 (124 aa).

A 3-methylthioaspartic acid modification is found at aspartate 89.

This sequence belongs to the universal ribosomal protein uS12 family. As to quaternary structure, part of the 30S ribosomal subunit. Contacts proteins S8 and S17. May interact with IF1 in the 30S initiation complex.

Its function is as follows. With S4 and S5 plays an important role in translational accuracy. Interacts with and stabilizes bases of the 16S rRNA that are involved in tRNA selection in the A site and with the mRNA backbone. Located at the interface of the 30S and 50S subunits, it traverses the body of the 30S subunit contacting proteins on the other side and probably holding the rRNA structure together. The combined cluster of proteins S8, S12 and S17 appears to hold together the shoulder and platform of the 30S subunit. The chain is Small ribosomal subunit protein uS12 from Sodalis glossinidius (strain morsitans).